We begin with the raw amino-acid sequence, 255 residues long: 1-(5-phosphoribosyl)-5-[(5-phosphoribosylamino)methylideneamino] imidazole-4-carboxamide isomerase (255 aa).

The active-site Proton acceptor is Asp-8. Asp-129 serves as the catalytic Proton donor.

It belongs to the HisA/HisF family.

The protein localises to the cytoplasm. It catalyses the reaction 1-(5-phospho-beta-D-ribosyl)-5-[(5-phospho-beta-D-ribosylamino)methylideneamino]imidazole-4-carboxamide = 5-[(5-phospho-1-deoxy-D-ribulos-1-ylimino)methylamino]-1-(5-phospho-beta-D-ribosyl)imidazole-4-carboxamide. It participates in amino-acid biosynthesis; L-histidine biosynthesis; L-histidine from 5-phospho-alpha-D-ribose 1-diphosphate: step 4/9. The sequence is that of 1-(5-phosphoribosyl)-5-[(5-phosphoribosylamino)methylideneamino] imidazole-4-carboxamide isomerase from Synechococcus sp. (strain CC9605).